Consider the following 288-residue polypeptide: Polyamine aminopropyltransferase (288 aa).

A PABS domain is found at 9–238; the sequence is ETLHDQFGQY…GIMTFAWATD (230 aa). Residue Q33 coordinates S-methyl-5'-thioadenosine. Spermidine-binding residues include H64 and D88. S-methyl-5'-thioadenosine is bound by residues E108 and 140 to 141; that span reads DG. D158 functions as the Proton acceptor in the catalytic mechanism. 158-161 is a spermidine binding site; sequence DCTD. Residue P165 coordinates S-methyl-5'-thioadenosine.

The protein belongs to the spermidine/spermine synthase family. In terms of assembly, homodimer or homotetramer.

Its subcellular location is the cytoplasm. It carries out the reaction S-adenosyl 3-(methylsulfanyl)propylamine + putrescine = S-methyl-5'-thioadenosine + spermidine + H(+). It functions in the pathway amine and polyamine biosynthesis; spermidine biosynthesis; spermidine from putrescine: step 1/1. In terms of biological role, catalyzes the irreversible transfer of a propylamine group from the amino donor S-adenosylmethioninamine (decarboxy-AdoMet) to putrescine (1,4-diaminobutane) to yield spermidine. This chain is Polyamine aminopropyltransferase, found in Shigella boydii serotype 4 (strain Sb227).